Here is a 483-residue protein sequence, read N- to C-terminus: Pre-glycoprotein polyprotein GP complex (483 aa).

A lipid anchor (N-myristoyl glycine; by host) is attached at glycine 2. At 2 to 17 (GQFISFMQEIPIFLQE) the chain is on the extracellular side. A helical membrane pass occupies residues 18–32 (ALNIALVAVSLICIV). A topological domain (cytoplasmic) is located at residue lysine 33. A helical transmembrane segment spans residues 34–53 (GLVNLYRCGLFQLMVFLVLA). Extracellular segments lie at residues 54 to 58 (GRSCS) and 59 to 422 (EETF…TLVD). Residue cysteine 57 participates in Zn(2+) binding. Residues asparagine 83 and asparagine 95 are each glycosylated (N-linked (GlcNAc...) asparagine; by host). Cystine bridges form between cysteine 92/cysteine 224, cysteine 134/cysteine 162, cysteine 205/cysteine 211, cysteine 269/cysteine 282, cysteine 291/cysteine 300, and cysteine 354/cysteine 375. Asparagine 164 and asparagine 176 each carry an N-linked (GlcNAc...) asparagine; by host glycan. 4 N-linked (GlcNAc...) asparagine; by host glycosylation sites follow: asparagine 355, asparagine 363, asparagine 380, and asparagine 385. Residues 423–443 (ICFWSTVFFTSTLFLHLIGFP) traverse the membrane as a helical segment. At 444–483 (THEHIRGEGCPLPHRLNSMGGCRCGKYLPLKKPTIWHRRH) the chain is on the cytoplasmic side. The Zn(2+) site is built by histidine 445, histidine 447, cysteine 453, histidine 457, cysteine 465, cysteine 467, and histidine 483.

This sequence belongs to the arenaviridae GPC protein family. Homotetramer; disulfide-linked. As to quaternary structure, homotetramer. GP2 homotetramers bind through ionic interactions with GP1 homotetramers to form the GP complex together with the stable signal peptide. The GP-C polyprotein interacts with the host protease MBTPS1/SKI-1 resulting in the polyprotein processing. Post-translationally, specific enzymatic cleavages in vivo yield mature proteins. GP-C polyprotein is cleaved in the endoplasmic reticulum by the host protease MBTPS1. Only cleaved glycoprotein is incorporated into virions. In terms of processing, the SSP remains stably associated with the GP complex following cleavage by signal peptidase and plays crucial roles in the trafficking of GP through the secretory pathway. Myristoylation is necessary for GP2-mediated fusion activity.

The protein localises to the virion membrane. The protein resides in the host endoplasmic reticulum membrane. Its subcellular location is the host Golgi apparatus membrane. It localises to the host cell membrane. Class I viral fusion protein that directs fusion of viral and host endosomal membranes, leading to delivery of the nucleocapsid into the cytoplasm. Membrane fusion is mediated by irreversible conformational changes induced upon acidification in the endosome. In terms of biological role, stable signal peptide (SSP): cleaved and functions as a signal peptide. In addition, it is also retained as the third component of the GP complex. The SSP is required for efficient glycoprotein expression, post-translational maturation cleavage of GP1 and GP2, glycoprotein transport to the cell surface plasma membrane, formation of infectious virus particles, and acid pH-dependent glycoprotein-mediated cell fusion. Its function is as follows. Interacts with the host receptor. The chain is Pre-glycoprotein polyprotein GP complex from Tacaribe virus (strain V5) (TCRV).